The following is a 294-amino-acid chain: Glyceraldehyde-3-phosphate dehydrogenase (294 aa).

Positions 19, 63, and 105 each coordinate NAD(+). D-glyceraldehyde 3-phosphate-binding positions include 134–136 (SCT), Thr-165, 194–195 (TG), and Arg-217. The active-site Nucleophile is Cys-135.

Belongs to the glyceraldehyde-3-phosphate dehydrogenase family. In terms of assembly, homotetramer.

The protein localises to the cytoplasm. The catalysed reaction is D-glyceraldehyde 3-phosphate + phosphate + NAD(+) = (2R)-3-phospho-glyceroyl phosphate + NADH + H(+). It participates in carbohydrate degradation; glycolysis; pyruvate from D-glyceraldehyde 3-phosphate: step 1/5. In terms of biological role, catalyzes the oxidative phosphorylation of glyceraldehyde 3-phosphate (G3P) to 1,3-bisphosphoglycerate (BPG) using the cofactor NAD. The first reaction step involves the formation of a hemiacetal intermediate between G3P and a cysteine residue, and this hemiacetal intermediate is then oxidized to a thioester, with concomitant reduction of NAD to NADH. The reduced NADH is then exchanged with the second NAD, and the thioester is attacked by a nucleophilic inorganic phosphate to produce BPG. The sequence is that of Glyceraldehyde-3-phosphate dehydrogenase (gap) from Atlantibacter hermannii (Escherichia hermannii).